We begin with the raw amino-acid sequence, 233 residues long: 2,3,4,5-tetrahydropyridine-2,6-dicarboxylate N-acetyltransferase (233 aa).

The protein belongs to the transferase hexapeptide repeat family. DapH subfamily.

It catalyses the reaction (S)-2,3,4,5-tetrahydrodipicolinate + acetyl-CoA + H2O = L-2-acetamido-6-oxoheptanedioate + CoA. It functions in the pathway amino-acid biosynthesis; L-lysine biosynthesis via DAP pathway; LL-2,6-diaminopimelate from (S)-tetrahydrodipicolinate (acetylase route): step 1/3. Catalyzes the transfer of an acetyl group from acetyl-CoA to tetrahydrodipicolinate. The protein is 2,3,4,5-tetrahydropyridine-2,6-dicarboxylate N-acetyltransferase of Oenococcus oeni (strain ATCC BAA-331 / PSU-1).